The primary structure comprises 474 residues: Sugar transporter ERD6-like 17 (474 aa).

The next 12 membrane-spanning stretches (helical) occupy residues 27–47 (ITAC…SFGV), 76–96 (FATL…MVIG), 106–126 (FLCI…LLNF), 129–149 (IISG…IAEI), 159–180 (TFSN…GNFI), 184–204 (TLAL…FFVP), 266–286 (TLVV…AAVI), 302–322 (IGTT…LILV), 329–349 (PLLM…GVAF), 363–383 (ILSF…LGGL), 403–423 (IVTL…NFLF), and 429–449 (GTFF…WLLV).

It belongs to the major facilitator superfamily. Sugar transporter (TC 2.A.1.1) family. As to expression, expressed in young seedlings.

It is found in the membrane. Sugar transporter. The sequence is that of Sugar transporter ERD6-like 17 from Arabidopsis thaliana (Mouse-ear cress).